The primary structure comprises 87 residues: MAERNSRKVYQGRVVSDKMDKTITVEVSTVKMHPVYGKRMKYSKKYYVHDEDNTAKTGDIVRIAETRPLSRNKRFRLLNIVEKAVII.

The protein belongs to the universal ribosomal protein uS17 family. As to quaternary structure, part of the 30S ribosomal subunit.

One of the primary rRNA binding proteins, it binds specifically to the 5'-end of 16S ribosomal RNA. This Lacticaseibacillus casei (strain BL23) (Lactobacillus casei) protein is Small ribosomal subunit protein uS17.